The sequence spans 367 residues: Ferrochelatase (367 aa).

Fe cation-binding residues include histidine 213 and glutamate 294.

It belongs to the ferrochelatase family.

The protein resides in the cytoplasm. It catalyses the reaction heme b + 2 H(+) = protoporphyrin IX + Fe(2+). The protein operates within porphyrin-containing compound metabolism; protoheme biosynthesis; protoheme from protoporphyrin-IX: step 1/1. Catalyzes the ferrous insertion into protoporphyrin IX. This chain is Ferrochelatase, found in Polaromonas sp. (strain JS666 / ATCC BAA-500).